The sequence spans 468 residues: 6-phospho-beta-galactosidase 2 (468 aa).

Positions 19, 116, 159, 160, and 297 each coordinate D-galactose 6-phosphate. The active-site Proton donor is the E160. E375 (nucleophile) is an active-site residue. The D-galactose 6-phosphate site is built by S428, W429, K435, and Y437.

Belongs to the glycosyl hydrolase 1 family.

It catalyses the reaction a 6-phospho-beta-D-galactoside + H2O = D-galactose 6-phosphate + an alcohol. Its pathway is carbohydrate metabolism; lactose degradation; D-galactose 6-phosphate and beta-D-glucose from lactose 6-phosphate: step 1/1. This Streptococcus pneumoniae (strain ATCC BAA-255 / R6) protein is 6-phospho-beta-galactosidase 2.